Consider the following 477-residue polypeptide: Cytoplasmic 60S subunit biogenesis factor ZNF622 (477 aa).

An N-acetylalanine modification is found at Ala2. 2 U1-type zinc fingers span residues 4–28 and 67–91; these read YTCITCRVAFRDADMQRAHYKTDWH and TYCTVCSKKFASFNAYENHLKSRRH. Positions 135–212 are disordered; the sequence is AIKAQPSMSP…EDLDGDDWED (78 aa). Residues 167–178 are compositionally biased toward basic and acidic residues; that stretch reads GTHDRDPSEKPP. Residues 196 to 212 are compositionally biased toward acidic residues; sequence EDSEEEEEDLDGDDWED. Phosphoserine is present on Ser276.

It belongs to the REI1 family. Homo- and heterodimer. Associates with pre-60S ribosomal particles. Interacts with MELK and MYBL2. Interacts with DNAJC21. Post-translationally, phosphorylated by MELK. The phosphorylation may redirect the protein to the nucleus. In terms of processing, ubiquitinated by HECTD1, leading to its degradation. In terms of tissue distribution, expressed in lung, kidney, spleen, liver and brain with lowest expression in kidney.

The protein localises to the cytoplasm. It localises to the nucleus. Functionally, pre-60S-associated cytoplasmic factor involved in the cytoplasmic maturation of the 60S subunit. This is Cytoplasmic 60S subunit biogenesis factor ZNF622 from Homo sapiens (Human).